A 241-amino-acid chain; its full sequence is Small ribosomal subunit protein uS2 (241 aa).

The protein belongs to the universal ribosomal protein uS2 family.

The protein is Small ribosomal subunit protein uS2 of Escherichia coli O127:H6 (strain E2348/69 / EPEC).